Consider the following 70-residue polypeptide: Uteroglobin (70 aa).

Belongs to the secretoglobin family. As to quaternary structure, antiparallel homodimer; disulfide-linked. Interaction with LMBR1L is controversial. As to expression, club cells (nonciliated cells of the surface epithelium of the pulmonary airways).

It localises to the secreted. In terms of biological role, binds phosphatidylcholine, phosphatidylinositol, polychlorinated biphenyls (PCB) and weakly progesterone, potent inhibitor of phospholipase A2. This chain is Uteroglobin (SCGB1A1), found in Macaca fuscata fuscata (Japanese macaque).